The following is a 78-amino-acid chain: MSGLGIMVLTLLLLVFMATSHQDAGEKQATQRDAINVRRRRSITRRVDEECNEYCDDRNKECCGRTNGHPRCANVCFG.

The N-terminal stretch at 1–24 (MSGLGIMVLTLLLLVFMATSHQDA) is a signal peptide. Residues 25–44 (GEKQATQRDAINVRRRRSIT) constitute a propeptide that is removed on maturation. 3 cysteine pairs are disulfide-bonded: C51–C63, C55–C72, and C62–C76. Position 77 is a phenylalanine amide (F77).

Belongs to the conotoxin O3 superfamily. Expressed by the venom duct.

The protein localises to the secreted. In Conus tessulatus (Tessellate cone), this protein is Conotoxin TsMSGL-11.